The sequence spans 339 residues: Glycerol-3-phosphate dehydrogenase [NAD(P)+] (339 aa).

NADPH is bound by residues serine 15, tyrosine 16, histidine 36, and lysine 110. Residues lysine 110, glycine 139, and threonine 141 each contribute to the sn-glycerol 3-phosphate site. Alanine 143 is a binding site for NADPH. Positions 195, 248, 258, 259, and 260 each coordinate sn-glycerol 3-phosphate. The Proton acceptor role is filled by lysine 195. An NADPH-binding site is contributed by arginine 259. NADPH is bound by residues valine 283 and glutamate 285.

This sequence belongs to the NAD-dependent glycerol-3-phosphate dehydrogenase family.

The protein localises to the cytoplasm. The catalysed reaction is sn-glycerol 3-phosphate + NAD(+) = dihydroxyacetone phosphate + NADH + H(+). It carries out the reaction sn-glycerol 3-phosphate + NADP(+) = dihydroxyacetone phosphate + NADPH + H(+). Its pathway is membrane lipid metabolism; glycerophospholipid metabolism. In terms of biological role, catalyzes the reduction of the glycolytic intermediate dihydroxyacetone phosphate (DHAP) to sn-glycerol 3-phosphate (G3P), the key precursor for phospholipid synthesis. In Citrobacter koseri (strain ATCC BAA-895 / CDC 4225-83 / SGSC4696), this protein is Glycerol-3-phosphate dehydrogenase [NAD(P)+].